We begin with the raw amino-acid sequence, 376 residues long: Chaperone protein DnaJ (376 aa).

Residues 4–68 form the J domain; sequence DYYEILGVAR…ETRARYDRFG (65 aa). Residues 102 to 121 form a disordered region; it reads GGMGGPTQQRRRGGPARGDD. The CR-type zinc finger occupies 136 to 218; it reads GGEKEIRISH…CDGKGTNQVT (83 aa). Zn(2+) contacts are provided by C149, C152, C166, C169, C192, C195, C206, and C209. 4 CXXCXGXG motif repeats span residues 149–156, 166–173, 192–199, and 206–213; these read CETCSGSG, CSTCSGSG, CPTCNGTG, and CDACDGKG.

The protein belongs to the DnaJ family. Homodimer. The cofactor is Zn(2+).

It is found in the cytoplasm. Participates actively in the response to hyperosmotic and heat shock by preventing the aggregation of stress-denatured proteins and by disaggregating proteins, also in an autonomous, DnaK-independent fashion. Unfolded proteins bind initially to DnaJ; upon interaction with the DnaJ-bound protein, DnaK hydrolyzes its bound ATP, resulting in the formation of a stable complex. GrpE releases ADP from DnaK; ATP binding to DnaK triggers the release of the substrate protein, thus completing the reaction cycle. Several rounds of ATP-dependent interactions between DnaJ, DnaK and GrpE are required for fully efficient folding. Also involved, together with DnaK and GrpE, in the DNA replication of plasmids through activation of initiation proteins. The sequence is that of Chaperone protein DnaJ from Trichormus variabilis (strain ATCC 29413 / PCC 7937) (Anabaena variabilis).